The chain runs to 758 residues: UPF0313 protein CV_1738 (758 aa).

In terms of domain architecture, Radical SAM core spans 377-642; that stretch reads AWEMIKYSVN…VDVVRDGYRR (266 aa). The [4Fe-4S] cluster site is built by Cys-391, Cys-395, and Cys-398. Residues 698-758 form a disordered region; that stretch reads GAPMNRGKSP…KPGGKTSRSR (61 aa). A compositionally biased stretch (gly residues) spans 727–737; it reads RGQGGQGGRPG.

This sequence belongs to the UPF0313 family. It depends on [4Fe-4S] cluster as a cofactor.

This Chromobacterium violaceum (strain ATCC 12472 / DSM 30191 / JCM 1249 / CCUG 213 / NBRC 12614 / NCIMB 9131 / NCTC 9757 / MK) protein is UPF0313 protein CV_1738.